Consider the following 128-residue polypeptide: uncharacterized protein (128 aa).

2 helical membrane passes run 45–65 and 95–115; these read GYFHWSLITQNYIIFLFLFPF and FMSHIPVLTVISYCVCCLSCF.

The protein localises to the membrane. This is an uncharacterized protein from Saccharomyces cerevisiae (strain ATCC 204508 / S288c) (Baker's yeast).